The following is a 393-amino-acid chain: Endoplasmic reticulum junction formation protein lunapark-A (393 aa).

Over 1 to 45 (MGAVVSRWRAKPSTVEVLEGLDKDIQVLEEYREKNHKQLKLWVYR) the chain is Cytoplasmic. Residues 46-66 (LLLYSALLYLMACAVVYAWYI) traverse the membrane as a helical segment. Residues 67-69 (PER) are Lumenal-facing. A helical membrane pass occupies residues 70–90 (MIGKLIVASPFLLFPLLIWLL). Residues 91–393 (RKLLIILYNK…EQDVSAMEVE (303 aa)) lie on the Cytoplasmic side of the membrane. The stretch at 95–130 (IILYNKRTERNNEKLEELKAEKKKILEQVMETETYK) forms a coiled coil. The disordered stretch occupies residues 146 to 209 (KLELETQPIG…PPEKGLSAST (64 aa)). Over residues 176-190 (TGRPPPVPVPGPSVP) the composition is skewed to pro residues. The C4-type; plays a role in ER morphology zinc-finger motif lies at 269-294 (CQQCLSHNGMALKEEFEYIAFRCAYC). Residues 314-393 (AAEAKTSQDP…EQDVSAMEVE (80 aa)) are disordered. Composition is skewed to basic and acidic residues over residues 340-353 (ESKE…KAGD) and 364-383 (EEMK…KSDG).

The protein belongs to the lunapark family. In terms of assembly, homodimer; homodimerization requires the C4-type zinc finger motif and decreases during mitosis in a phosphorylation-dependent manner. In terms of processing, phosphorylated. Phosphorylation occurs during interphase. Phosphorylation also occurs during mitosis; these phosphorylations reduce both its homodimerization and the ER three-way tubular junction formation.

Its subcellular location is the endoplasmic reticulum membrane. Functionally, endoplasmic reticulum (ER)-shaping membrane protein that plays a role in determining ER morphology. Involved in the stabilization of nascent three-way ER tubular junctions within the ER network. May also play a role as a curvature-stabilizing protein within three-way ER tubular junction network. The chain is Endoplasmic reticulum junction formation protein lunapark-A (lnpka) from Danio rerio (Zebrafish).